The primary structure comprises 1049 residues: Multidrug efflux pump subunit AcrB (1049 aa).

Over 1-9 (MPNFFIDRP) the chain is Cytoplasmic. Residues 10–28 (IFAWVIAIIIMLAGGLAIL) traverse the membrane as a helical segment. Topologically, residues 29 to 336 (KLPVAQYPTI…YDTTPFVKIS (308 aa)) are periplasmic. The helical transmembrane segment at 337–356 (IHEVVKTLVEAIILVFLVMY) threads the bilayer. Topologically, residues 357-365 (LFLQNFRAT) are cytoplasmic. The helical transmembrane segment at 366 to 385 (LIPTIAVPVVLLGTFAVLAA) threads the bilayer. At 386–391 (FGFSIN) the chain is on the periplasmic side. A helical membrane pass occupies residues 392–413 (TLTMFGMVLAIGLLVDDAIVVV). Topologically, residues 414 to 438 (ENVERVMAEEGLPPKEATRKSMGQI) are cytoplasmic. Residues 439–457 (QGALVGIAMVLSAVFVPMA) form a helical membrane-spanning segment. Over 458–465 (FFGGSTGA) the chain is Periplasmic. Residues 466–490 (IYRQFSITIVSAMALSVLVALILTP) traverse the membrane as a helical segment. Over 491-538 (ALCATMLKPIAKGDHGEGKKGFFGWFNRMFEKSTHHYTDSVGGILRST) the chain is Cytoplasmic. Residues 539 to 555 (GRYLVLYLIIVVGMAYL) traverse the membrane as a helical segment. The Periplasmic portion of the chain corresponds to 556-871 (FVRLPSSFLP…MSYQERLSGN (316 aa)). A helical transmembrane segment spans residues 872-888 (QAPSLYAISLIVVFLCL). Topologically, residues 889 to 898 (AALYESWSIP) are cytoplasmic. Residues 899–918 (FSVMLVVPLGVIGALLAATF) form a helical membrane-spanning segment. Residues 919 to 924 (RGLTND) are Periplasmic-facing. A helical membrane pass occupies residues 925–943 (VYFQVGLLTTIGLSAKNAI). Residues 944 to 972 (LIVEFAKDLMDKEGKGLIEATLDAVRMRL) are Cytoplasmic-facing. The chain crosses the membrane as a helical span at residues 973-992 (RPILMTSLAFILGVMPLVIS). Topologically, residues 993-998 (TGAGSG) are periplasmic. Residues 999–1018 (AQNAVGTGVMGGMVTATVLA) traverse the membrane as a helical segment. Over 1019-1049 (IFFVPVFFVVVRRRFSRKNEDIEHSHTVDHH) the chain is Cytoplasmic.

Belongs to the resistance-nodulation-cell division (RND) (TC 2.A.6) family. As to quaternary structure, homotrimer, with large domains that extend into the periplasm, interacts with AcrA and TolC. AcrA may be required to stably link this protein and TolC. Interacts with AcrZ. Part of the AcrA-AcrB-AcrZ-TolC efflux pump.

It localises to the cell inner membrane. Its function is as follows. AcrA-AcrB-AcrZ-TolC is a drug efflux protein complex with broad substrate specificity that uses the proton motive force to export substrates. (Microbial infection) Involved in contact-dependent growth inhibition (CDI), acts downstream of BamA, the receptor for CDI. Its role in CDI is independent of the AcrA-AcrB-TolC efflux pump complex. This chain is Multidrug efflux pump subunit AcrB (acrB), found in Escherichia coli (strain K12).